The following is a 465-amino-acid chain: Cysteine--tRNA ligase (465 aa).

Position 27 (cysteine 27) interacts with Zn(2+). The short motif at 29–39 (PTVYNFFHIGN) is the 'HIGH' region element. Cysteine 207, histidine 232, and glutamate 236 together coordinate Zn(2+). Positions 264-268 (KMSKS) match the 'KMSKS' region motif. Lysine 267 contacts ATP.

This sequence belongs to the class-I aminoacyl-tRNA synthetase family. In terms of assembly, monomer. The cofactor is Zn(2+).

It is found in the cytoplasm. It carries out the reaction tRNA(Cys) + L-cysteine + ATP = L-cysteinyl-tRNA(Cys) + AMP + diphosphate. The polypeptide is Cysteine--tRNA ligase (Clostridium kluyveri (strain NBRC 12016)).